A 242-amino-acid polypeptide reads, in one-letter code: Aspartate/glutamate leucyltransferase (242 aa).

It belongs to the R-transferase family. Bpt subfamily.

It localises to the cytoplasm. It catalyses the reaction N-terminal L-glutamyl-[protein] + L-leucyl-tRNA(Leu) = N-terminal L-leucyl-L-glutamyl-[protein] + tRNA(Leu) + H(+). The catalysed reaction is N-terminal L-aspartyl-[protein] + L-leucyl-tRNA(Leu) = N-terminal L-leucyl-L-aspartyl-[protein] + tRNA(Leu) + H(+). Functionally, functions in the N-end rule pathway of protein degradation where it conjugates Leu from its aminoacyl-tRNA to the N-termini of proteins containing an N-terminal aspartate or glutamate. This Alcanivorax borkumensis (strain ATCC 700651 / DSM 11573 / NCIMB 13689 / SK2) protein is Aspartate/glutamate leucyltransferase.